The chain runs to 158 residues: uncharacterized protein (158 aa).

4 consecutive transmembrane segments (helical) span residues Ile12–Val32, Leu39–Val59, Leu90–Ile110, and Ile113–Leu133.

It localises to the cell membrane. This is an uncharacterized protein from Mycoplasma genitalium (strain ATCC 33530 / DSM 19775 / NCTC 10195 / G37) (Mycoplasmoides genitalium).